A 620-amino-acid polypeptide reads, in one-letter code: Chaperone protein HscA homolog (620 aa).

It belongs to the heat shock protein 70 family.

Functionally, chaperone involved in the maturation of iron-sulfur cluster-containing proteins. Has a low intrinsic ATPase activity which is markedly stimulated by HscB. The sequence is that of Chaperone protein HscA homolog from Herminiimonas arsenicoxydans.